A 279-amino-acid chain; its full sequence is HTH-type transcriptional activator RhaS (279 aa).

The region spanning 175-273 (QALLGWLQNN…SQAPKSLRHQ (99 aa)) is the HTH araC/xylS-type domain. 2 DNA-binding regions (H-T-H motif) span residues 192-213 (GGLA…KQHT) and 240-263 (ITTI…RKAF).

Binds DNA as a dimer.

Its subcellular location is the cytoplasm. Its function is as follows. Activates expression of the rhaBAD and rhaT operons. The protein is HTH-type transcriptional activator RhaS of Pectobacterium atrosepticum (strain SCRI 1043 / ATCC BAA-672) (Erwinia carotovora subsp. atroseptica).